The primary structure comprises 874 residues: Leucine--tRNA ligase (874 aa).

The short motif at 43–53 (PYPSGRIHIGH) is the 'HIGH' region element. A 'KMSKS' region motif is present at residues 630–634 (KMSKS). An ATP-binding site is contributed by lysine 633.

This sequence belongs to the class-I aminoacyl-tRNA synthetase family.

It is found in the cytoplasm. It carries out the reaction tRNA(Leu) + L-leucine + ATP = L-leucyl-tRNA(Leu) + AMP + diphosphate. This is Leucine--tRNA ligase from Bradyrhizobium diazoefficiens (strain JCM 10833 / BCRC 13528 / IAM 13628 / NBRC 14792 / USDA 110).